A 220-amino-acid polypeptide reads, in one-letter code: Protein DGCR6 (220 aa).

Residues 76–142 (KSLYNQRLRL…EQRAMDQKIV (67 aa)) adopt a coiled-coil conformation.

Belongs to the gonadal family. As to expression, found in all tissues examined with highest expression in liver, heart and skeletal muscle. Lower levels in pancreas and placenta. Weak expression in brain.

Its subcellular location is the nucleus. May play a role in neural crest cell migration into the third and fourth pharyngeal pouches. This is Protein DGCR6 (DGCR6) from Homo sapiens (Human).